Reading from the N-terminus, the 289-residue chain is (3R)-3-[(carboxymethyl)amino]fatty acid oxygenase/decarboxylase (289 aa).

The a (3R)-3-[(carboxymethyl)amino]fatty acid site is built by Y65, Y70, and G93. H97 and D99 together coordinate Fe(2+). A (3R)-3-[(carboxymethyl)amino]fatty acid-binding residues include Y100 and K158. H260 serves as a coordination point for Fe(2+). H264 contributes to the 2-oxoglutarate binding site. R275 provides a ligand contact to a (3R)-3-[(carboxymethyl)amino]fatty acid.

This sequence belongs to the TfdA dioxygenase family. It depends on Fe(2+) as a cofactor.

It catalyses the reaction a (3R)-3-[(carboxymethyl)amino]fatty acid + 2 2-oxoglutarate + 2 O2 = a (3R)-3-isocyanyl-fatty acid + 2 succinate + 3 CO2 + 2 H2O. It carries out the reaction a (3R)-3-[(carboxymethyl)amino]fatty acid + 2-oxoglutarate + O2 = a (3R)-3-{[carboxy(hydroxy)methyl]amino}fatty acid + succinate + CO2. The catalysed reaction is a (3R)-3-{[carboxy(hydroxy)methyl]amino}fatty acid + 2-oxoglutarate + O2 = a (3R)-3-isocyanyl-fatty acid + succinate + 2 CO2 + 2 H2O. Functionally, involved in the biosynthesis of a unique class of isonitrile lipopeptides (INLPs) that seem to play a role in metal acquisition in M.marinum. Catalyzes the conversion of (3R)-3-[(carboxymethyl)amino]fatty acids to (3R)-3-isocyanyl-fatty acids through an oxidative decarboxylation mechanism, thereby generating the isonitrile group of INLPs. The sequence is that of (3R)-3-[(carboxymethyl)amino]fatty acid oxygenase/decarboxylase from Mycobacterium marinum (strain ATCC BAA-535 / M).